A 494-amino-acid polypeptide reads, in one-letter code: Sugar phosphate exchanger 3 (494 aa).

The helical transmembrane segment at 16-36 (FSHHHVVVFLLTFFSYSLLHA) threads the bilayer. A glycan (N-linked (GlcNAc...) asparagine) is linked at Asn58. 5 helical membrane-spanning segments follow: residues 81–101 (TLFL…GLFI), 113–133 (WVLS…GALT), 147–167 (LWIV…AVMG), 177–197 (VVFG…ACLA), and 209–229 (FLVT…GLLV). The N-linked (GlcNAc...) asparagine glycan is linked to Asn266. Helical transmembrane passes span 297-317 (LAYA…PFYL), 333-353 (IWYD…SDVL), 357-377 (APVL…YSRS), 386-406 (LLMT…SSAI), 428-448 (GIVD…VSLI), and 452-472 (LGWM…IVFI).

It belongs to the major facilitator superfamily. Organophosphate:Pi antiporter (OPA) (TC 2.A.1.4) family. Interacts with ATRAID; the interaction is direct and both proteins are mutually dependent for their stability. Glycosylated. Expressed in liver, kidney, intestine and pancreas.

Its subcellular location is the endoplasmic reticulum membrane. The protein localises to the lysosome membrane. Its function is as follows. Unlike the other SLC37 members, lacks glucose-6-phosphate antiporter activity. In osteoclasts, forms a transporter complex with ATRAID for nitrogen-containing-bisphophonates (N-BPs) required for releasing N-BP molecules that have trafficked to lysosomes through fluid-phase endocytosis into the cytosol. This is Sugar phosphate exchanger 3 from Homo sapiens (Human).